The sequence spans 100 residues: Small ribosomal subunit protein eS24 (100 aa).

The protein belongs to the eukaryotic ribosomal protein eS24 family.

This chain is Small ribosomal subunit protein eS24, found in Methanothermobacter thermautotrophicus (strain ATCC 29096 / DSM 1053 / JCM 10044 / NBRC 100330 / Delta H) (Methanobacterium thermoautotrophicum).